The primary structure comprises 207 residues: MTSRKKVLLKVIILGDSGVGKTSLMNQYVNKKFSNQYKATIGADFLTKEVMVDDRLVTMQIWDTAGQERFQSLSVAFYRGADCCVLVFDVTAPNTFKTLDSWRLEFLIQASPRDPENFPFVVLGNKIDLENRQVATKRAQAWSYSKNNIPYFETSAKEAINVEQAFQTIARNALKQETEVELYNEFPEPMKLDKNDRAKTSAESCSC.

T2 carries the post-translational modification N-acetylthreonine. Residues S17, G18, V19, G20, K21, T22, S23, S34, N35, Y37, and T40 each coordinate GTP. T22 is a binding site for Mg(2+). Positions 28–41 (YVNKKFSNQYKATI) match the Switch 1 motif. Mg(2+)-binding residues include T40 and D63. Residue G66 participates in GTP binding. The Switch 2 signature appears at 67–82 (QERFQSLSVAFYRGAD). A Phosphoserine modification is found at S72. GTP is bound by residues N125, K126, D128, A156, and K157. Glycyl lysine isopeptide (Lys-Gly) (interchain with G-Cter in ubiquitin) cross-links involve residues K191 and K194. 2 S-geranylgeranyl cysteine lipidation sites follow: C205 and C207. Cysteine methyl ester is present on C207.

The protein belongs to the small GTPase superfamily. Rab family. As to quaternary structure, interacts with NTRK1/TRKA. Interacts with RILP. Interacts with PSMA7. Interacts with RNF115. Interacts with FYCO1. Interacts with the PIK3C3/VPS34-PIK3R4 complex. The GTP-bound form interacts with OSBPL1A. The GTP-bound form interacts with RAC1. Interacts with CLN3. Interacts with CHM, the substrate-binding subunit of the Rab geranylgeranyltransferase complex. Interacts with C9orf72. Does not interact with HPS4 and the BLOC-3 complex (heterodimer of HPS1 and HPS4). Interacts with CLN5. Interacts with PLEKHM1 (via N- and C-terminus). Interacts with PRPH; the interaction is direct. Interacts with VPS13A. The GDP-bound form interacts with RIMOC1. Interacts with the MON1A-CCZ1B complex and this interaction is enhanced in the presence of RIMOC1. Interacts with VPS39 and VPS41. Forms a ternary complex with LAMP2 and RUFY4; the interaction with LAMP2 is mediated by RUFY4 (via RUN and coiled coil domains). Requires Mg(2+) as cofactor. Post-translationally, deubiquitination at Lys-191 and Lys-194 by USP32. In terms of processing, phosphorylated at Ser-72 by LRRK1; phosphorylation is dependent on protein kinase C (PKC) activation of LRRK1. Prenylated. Prenylation is required for association with cellular membranes.

The protein resides in the cytoplasmic vesicle. It localises to the phagosome membrane. It is found in the late endosome membrane. Its subcellular location is the lysosome membrane. The protein localises to the melanosome membrane. The protein resides in the autophagosome membrane. It localises to the lipid droplet. It is found in the endosome membrane. Its subcellular location is the mitochondrion membrane. It catalyses the reaction GTP + H2O = GDP + phosphate + H(+). Its activity is regulated as follows. Regulated by guanine nucleotide exchange factors (GEFs) which promote the exchange of bound GDP for free GTP. Regulated by GTPase activating proteins (GAPs) which increase the GTP hydrolysis activity. Inhibited by GDP dissociation inhibitors (GDIs). Functionally, the small GTPases Rab are key regulators of intracellular membrane trafficking, from the formation of transport vesicles to their fusion with membranes. Rabs cycle between an inactive GDP-bound form and an active GTP-bound form that is able to recruit to membranes different sets of downstream effectors directly responsible for vesicle formation, movement, tethering and fusion. In its active state, RAB7A binds to a variety of effector proteins playing a key role in the regulation of endo-lysosomal trafficking. Governs early-to-late endosomal maturation, microtubule minus-end as well as plus-end directed endosomal migration and positioning, and endosome-lysosome transport through different protein-protein interaction cascades. Also plays a central role in growth-factor-mediated cell signaling, nutrient-transporter-mediated nutrient uptake, neurotrophin transport in the axons of neurons and lipid metabolism. Also involved in regulation of some specialized endosomal membrane trafficking, such as maturation of melanosomes, pathogen-induced phagosomes (or vacuoles) and autophagosomes. Plays a role in the maturation and acidification of phagosomes that engulf pathogens, such as S.aureus and Mycobacteria. Plays a role in the fusion of phagosomes with lysosomes. In concert with RAC1, plays a role in regulating the formation of RBs (ruffled borders) in osteoclasts. Controls the endosomal trafficking and neurite outgrowth signaling of NTRK1/TRKA. Regulates the endocytic trafficking of the EGF-EGFR complex by regulating its lysosomal degradation. Involved in the ADRB2-stimulated lipolysis through lipophagy, a cytosolic lipase-independent autophagic pathway. Required for the exosomal release of SDCBP, CD63 and syndecan. Required for vesicular trafficking and cell surface expression of ACE2. May play a role in PRPH neuronal intermediate filament assembly. This Oryctolagus cuniculus (Rabbit) protein is Ras-related protein Rab-7a (RAB7A).